The chain runs to 342 residues: RNA 3'-terminal phosphate cyclase (342 aa).

Residues glutamine 100 and 283 to 287 (FLGDQ) contribute to the ATP site. Histidine 307 (tele-AMP-histidine intermediate) is an active-site residue.

The protein belongs to the RNA 3'-terminal cyclase family. Type 1 subfamily.

It localises to the cytoplasm. The catalysed reaction is a 3'-end 3'-phospho-ribonucleotide-RNA + ATP = a 3'-end 2',3'-cyclophospho-ribonucleotide-RNA + AMP + diphosphate. In terms of biological role, catalyzes the conversion of 3'-phosphate to a 2',3'-cyclic phosphodiester at the end of RNA. The mechanism of action of the enzyme occurs in 3 steps: (A) adenylation of the enzyme by ATP; (B) transfer of adenylate to an RNA-N3'P to produce RNA-N3'PP5'A; (C) and attack of the adjacent 2'-hydroxyl on the 3'-phosphorus in the diester linkage to produce the cyclic end product. The biological role of this enzyme is unknown but it is likely to function in some aspects of cellular RNA processing. The chain is RNA 3'-terminal phosphate cyclase (rtcA) from Pyrococcus abyssi (strain GE5 / Orsay).